We begin with the raw amino-acid sequence, 158 residues long: 2-C-methyl-D-erythritol 2,4-cyclodiphosphate synthase (158 aa).

Positions 9 and 11 each coordinate a divalent metal cation. 4-CDP-2-C-methyl-D-erythritol 2-phosphate-binding positions include 9-11 (DVH) and 35-36 (HS). H43 lines the a divalent metal cation pocket. 4-CDP-2-C-methyl-D-erythritol 2-phosphate-binding positions include 57-59 (DIG), 62-66 (FPDTD), 101-107 (AQKPKMA), 133-136 (TTTE), F140, and R143.

This sequence belongs to the IspF family. As to quaternary structure, homotrimer. A divalent metal cation is required as a cofactor.

It carries out the reaction 4-CDP-2-C-methyl-D-erythritol 2-phosphate = 2-C-methyl-D-erythritol 2,4-cyclic diphosphate + CMP. It functions in the pathway isoprenoid biosynthesis; isopentenyl diphosphate biosynthesis via DXP pathway; isopentenyl diphosphate from 1-deoxy-D-xylulose 5-phosphate: step 4/6. Involved in the biosynthesis of isopentenyl diphosphate (IPP) and dimethylallyl diphosphate (DMAPP), two major building blocks of isoprenoid compounds. Catalyzes the conversion of 4-diphosphocytidyl-2-C-methyl-D-erythritol 2-phosphate (CDP-ME2P) to 2-C-methyl-D-erythritol 2,4-cyclodiphosphate (ME-CPP) with a corresponding release of cytidine 5-monophosphate (CMP). This Bacillus velezensis (strain DSM 23117 / BGSC 10A6 / LMG 26770 / FZB42) (Bacillus amyloliquefaciens subsp. plantarum) protein is 2-C-methyl-D-erythritol 2,4-cyclodiphosphate synthase.